We begin with the raw amino-acid sequence, 343 residues long: Glyceraldehyde-3-phosphate dehydrogenase (343 aa).

NAD(+) is bound by residues 13–14 (TI) and glycine 111. 140-142 (SCN) provides a ligand contact to D-glyceraldehyde 3-phosphate. The active-site Nucleophile is the cysteine 141. Arginine 169 is an NAD(+) binding site. 195 to 196 (HA) provides a ligand contact to D-glyceraldehyde 3-phosphate. NAD(+) is bound at residue glutamine 303.

The protein belongs to the glyceraldehyde-3-phosphate dehydrogenase family. As to quaternary structure, homotetramer.

The protein resides in the cytoplasm. The enzyme catalyses D-glyceraldehyde 3-phosphate + phosphate + NADP(+) = (2R)-3-phospho-glyceroyl phosphate + NADPH + H(+). It catalyses the reaction D-glyceraldehyde 3-phosphate + phosphate + NAD(+) = (2R)-3-phospho-glyceroyl phosphate + NADH + H(+). Its pathway is carbohydrate degradation; glycolysis; pyruvate from D-glyceraldehyde 3-phosphate: step 1/5. The polypeptide is Glyceraldehyde-3-phosphate dehydrogenase (Sulfolobus acidocaldarius (strain ATCC 33909 / DSM 639 / JCM 8929 / NBRC 15157 / NCIMB 11770)).